The primary structure comprises 311 residues: Probable manganese-dependent inorganic pyrophosphatase (311 aa).

Mn(2+)-binding residues include H9, D13, D15, D77, H99, and D151.

The protein belongs to the PPase class C family. Mn(2+) serves as cofactor.

The protein resides in the cytoplasm. The enzyme catalyses diphosphate + H2O = 2 phosphate + H(+). This chain is Probable manganese-dependent inorganic pyrophosphatase, found in Streptococcus suis (strain 98HAH33).